We begin with the raw amino-acid sequence, 421 residues long: CinA-like protein (421 aa).

It belongs to the CinA family.

In Mycobacterium sp. (strain MCS), this protein is CinA-like protein.